The primary structure comprises 354 residues: Glycerol-3-phosphate dehydrogenase [NAD(+)], glycosomal (354 aa).

NAD(+) contacts are provided by residues 15 to 20 (GSGAFG), phenylalanine 90, lysine 118, and alanine 150. Lysine 118 serves as a coordination point for substrate. Lysine 203 acts as the Proton acceptor in catalysis. Residues arginine 267 and glutamate 293 each coordinate NAD(+). Residue 267-268 (RN) participates in substrate binding. The Microbody targeting signal signature appears at 352-354 (SKM).

Belongs to the NAD-dependent glycerol-3-phosphate dehydrogenase family.

Its subcellular location is the glycosome. The catalysed reaction is sn-glycerol 3-phosphate + NAD(+) = dihydroxyacetone phosphate + NADH + H(+). This is Glycerol-3-phosphate dehydrogenase [NAD(+)], glycosomal (GPD) from Trypanosoma brucei rhodesiense.